A 442-amino-acid polypeptide reads, in one-letter code: CBL-interacting serine/threonine-protein kinase 14 (442 aa).

Residues 22–276 (YEVGKLVGCG…IEEIIHDPWF (255 aa)) enclose the Protein kinase domain. ATP contacts are provided by residues 28–36 (VGCGAFAKV) and Lys51. Asp144 functions as the Proton acceptor in the catalytic mechanism. The tract at residues 162–191 (DFGLSALTDQIRPDGLLHTLCGTPAYVAPE) is activation loop. At Ser166 the chain carries Phosphoserine. A Phosphothreonine modification is found at Thr180. The region spanning 305-329 (MGARRMNAFDIISGSPGFNLSGLFG) is the NAF domain. Residues 335 to 365 (DRVERFVSAWTAERVVERLEEIVSAENLTVA) form a PPI region.

Belongs to the protein kinase superfamily. CAMK Ser/Thr protein kinase family. SNF1 subfamily. In terms of assembly, interacts with CBL2. Interacts with CBL3. Interacts with CBL8. Interacts with CBL9. Interacts with KIN10 and KIN11. Mn(2+) is required as a cofactor. As to expression, predominant in roots, cauline leaves, and flowers. Ubiquitous with highest expression in 7-day-old seedlings and flower buds, followed by that in cauline leaves and young siliques.

The protein localises to the cytoplasm. The protein resides in the nucleus. It carries out the reaction L-seryl-[protein] + ATP = O-phospho-L-seryl-[protein] + ADP + H(+). The enzyme catalyses L-threonyl-[protein] + ATP = O-phospho-L-threonyl-[protein] + ADP + H(+). Functionally, CIPK serine-threonine protein kinases interact with CBL proteins. Binding of a CBL protein to the regulatory NAF domain of CIPK protein lead to the activation of the kinase in a calcium-dependent manner. In Arabidopsis thaliana (Mouse-ear cress), this protein is CBL-interacting serine/threonine-protein kinase 14 (CIPK14).